Reading from the N-terminus, the 199-residue chain is Fe/S biogenesis protein NfuA (199 aa).

[4Fe-4S] cluster is bound by residues Cys-156 and Cys-159.

The protein belongs to the NfuA family. In terms of assembly, homodimer. The cofactor is [4Fe-4S] cluster.

Functionally, involved in iron-sulfur cluster biogenesis. Binds a 4Fe-4S cluster, can transfer this cluster to apoproteins, and thereby intervenes in the maturation of Fe/S proteins. Could also act as a scaffold/chaperone for damaged Fe/S proteins. The protein is Fe/S biogenesis protein NfuA of Actinobacillus pleuropneumoniae serotype 5b (strain L20).